The following is a 301-amino-acid chain: Probable alpha-L-glutamate ligase (301 aa).

Residues 104–287 enclose the ATP-grasp domain; it reads LQFLSRKGID…IAGMIIEFIE (184 aa). Residues Lys-141, 178–179, Asp-187, and 211–213 each bind ATP; these read EF and RSN. Asp-248, Glu-260, and Asn-262 together coordinate Mg(2+). The Mn(2+) site is built by Asp-248, Glu-260, and Asn-262.

This sequence belongs to the RimK family. Requires Mg(2+) as cofactor. The cofactor is Mn(2+).

The protein is Probable alpha-L-glutamate ligase of Coxiella burnetii (strain CbuK_Q154) (Coxiella burnetii (strain Q154)).